The primary structure comprises 766 residues: 5-methyltetrahydropteroyltriglutamate--homocysteine methyltransferase (766 aa).

5-methyltetrahydropteroyltri-L-glutamate-binding positions include 16–19 (RELK) and Lys-119. L-homocysteine contacts are provided by residues 440–442 (IGS) and Glu-493. L-methionine-binding positions include 440 to 442 (IGS) and Glu-493. 5-methyltetrahydropteroyltri-L-glutamate contacts are provided by residues 524–525 (RC) and Trp-570. Asp-608 contacts L-homocysteine. Residue Asp-608 coordinates L-methionine. Glu-614 is a binding site for 5-methyltetrahydropteroyltri-L-glutamate. Residues His-650, Cys-652, and Glu-674 each coordinate Zn(2+). Residue His-703 is the Proton donor of the active site. Cys-735 serves as a coordination point for Zn(2+).

Belongs to the vitamin-B12 independent methionine synthase family. Requires Zn(2+) as cofactor.

The enzyme catalyses 5-methyltetrahydropteroyltri-L-glutamate + L-homocysteine = tetrahydropteroyltri-L-glutamate + L-methionine. It participates in amino-acid biosynthesis; L-methionine biosynthesis via de novo pathway; L-methionine from L-homocysteine (MetE route): step 1/1. Its function is as follows. Catalyzes the transfer of a methyl group from 5-methyltetrahydrofolate to homocysteine resulting in methionine formation. This Pseudomonas aeruginosa (strain ATCC 15692 / DSM 22644 / CIP 104116 / JCM 14847 / LMG 12228 / 1C / PRS 101 / PAO1) protein is 5-methyltetrahydropteroyltriglutamate--homocysteine methyltransferase.